A 227-amino-acid chain; its full sequence is Thymidylate kinase (227 aa).

16-23 (GIDGAGKT) serves as a coordination point for ATP.

The protein belongs to the thymidylate kinase family.

The enzyme catalyses dTMP + ATP = dTDP + ADP. Its function is as follows. Phosphorylation of dTMP to form dTDP in both de novo and salvage pathways of dTTP synthesis. This is Thymidylate kinase from Xanthomonas oryzae pv. oryzae (strain MAFF 311018).